The primary structure comprises 283 residues: D-alanine aminotransferase (283 aa).

A substrate-binding site is contributed by tyrosine 32. Arginine 51 serves as a coordination point for pyridoxal 5'-phosphate. Arginine 99 and histidine 101 together coordinate substrate. The active-site Proton acceptor is the lysine 146. Lysine 146 carries the N6-(pyridoxal phosphate)lysine modification. Glutamate 178 contributes to the pyridoxal 5'-phosphate binding site.

The protein belongs to the class-IV pyridoxal-phosphate-dependent aminotransferase family. Homodimer. Pyridoxal 5'-phosphate serves as cofactor.

The enzyme catalyses D-alanine + 2-oxoglutarate = D-glutamate + pyruvate. Functionally, acts on the D-isomers of alanine, leucine, aspartate, glutamate, aminobutyrate, norvaline and asparagine. The enzyme transfers an amino group from a substrate D-amino acid to the pyridoxal phosphate cofactor to form pyridoxamine and an alpha-keto acid in the first half-reaction. The second half-reaction is the reverse of the first, transferring the amino group from the pyridoxamine to a second alpha-keto acid to form the product D-amino acid via a ping-pong mechanism. This is an important process in the formation of D-alanine and D-glutamate, which are essential bacterial cell wall components. The polypeptide is D-alanine aminotransferase (dat) (Lysinibacillus sphaericus (Bacillus sphaericus)).